A 255-amino-acid chain; its full sequence is MAVGKNKRLSKGKKGLKKRVQDPFSRKDEYLVKAPSTFAVRDVGKTIVNRTTGLKNANDSLKGRIFEVSLADLQNDQAHSFRKIKLRVDEVQGKNCLTNFHGMDFTSDKLRSLVRKWQSLIEANVTVKTTDDYLVRLFAIAFTKRRSFQVKKTTYARSSQIRAIRKKMVEIIQREASSRTLTQLTKLVPEVIGREIEKATRGIYPLQNVHIRKVKLLKQPKFDLGGLLALHGEASTDDKGQKVEREFTEQVLESV.

Basic residues predominate over residues 1–18 (MAVGKNKRLSKGKKGLKK). The tract at residues 1–20 (MAVGKNKRLSKGKKGLKKRV) is disordered. Ala2 is subject to N-acetylalanine; partial.

It belongs to the eukaryotic ribosomal protein eS1 family. In terms of assembly, component of the small ribosomal subunit. Mature ribosomes consist of a small (40S) and a large (60S) subunit. The 40S subunit contains about 33 different proteins and 1 molecule of RNA (18S). The 60S subunit contains about 49 different proteins and 3 molecules of RNA (25S, 5.8S and 5S).

It localises to the cytoplasm. This Coccidioides immitis (strain RS) (Valley fever fungus) protein is Small ribosomal subunit protein eS1.